Here is a 329-residue protein sequence, read N- to C-terminus: G-protein coupled receptor 3 (329 aa).

Residues 1–43 (MMWGAGRSMAWFSAGSGSVNVSIDPAEEPTGPATLLPSPRAWD) are Extracellular-facing. Asparagine 20 carries N-linked (GlcNAc...) asparagine glycosylation. The chain crosses the membrane as a helical span at residues 44–64 (VVLCISGTLVSCENALVVAII). Topologically, residues 65–73 (VGTPAFRAP) are cytoplasmic. The helical transmembrane segment at 74–94 (MFLLVGSLAVADLLAGLGLVL) threads the bilayer. The Extracellular segment spans residues 95–108 (HFAADFCIGSPEMS). The chain crosses the membrane as a helical span at residues 109–129 (LVLVGVLATAFTASIGSLLAI). The Cytoplasmic portion of the chain corresponds to 130-153 (TVDRYLSLYNALTYYSETTVTRTY). Residues 154-174 (VMLALVWVGALGLGLVPVLAW) traverse the membrane as a helical segment. Over 175–192 (NCRDGLTTCGVVYPLSKN) the chain is Extracellular. A helical membrane pass occupies residues 193–213 (HLVVLAIVFFMVFGIMLQLYA). At 214–247 (QICRIVCRHAQQIALQRHLLPASHYVATRKGIAT) the chain is on the cytoplasmic side. The helical transmembrane segment at 248–268 (LAVVLGAFAACWLPFTVYCLL) threads the bilayer. Residues 269–277 (GDANSPPLY) lie on the Extracellular side of the membrane. A helical transmembrane segment spans residues 278–298 (TYLTLLPATYNSMINPVIYAF). Over 299–329 (RNQDVQKVLWAICCCCSTSKIPFRSRSPSDV) the chain is Cytoplasmic. Cysteine 312 carries the S-palmitoyl cysteine lipid modification. Phosphoserine is present on residues serine 323, serine 325, and serine 327.

The protein belongs to the G-protein coupled receptor 1 family. As to expression, abundantly expressed in granule neurons at all development stages. Enriched in the longest tips of neurites during differentiation of hippocampal neurons.

The protein resides in the cell membrane. Its function is as follows. Constitutively active G-protein coupled receptor that maintains high 3'-5'-cyclic adenosine monophosphate (cAMP) levels that a plays a role in serveral processes including meiotic arrest in oocytes or neuronal development via activation of numerous intracellular signaling pathways. Acts as an essential activator of thermogenic adipocytes and drives thermogenesis via its intrinsic G(s)-coupling activity without the requirement of a ligand. Has a potential role in modulating a number of brain functions, including behavioral responses to stress, amyloid-beta peptide generation in neurons. Stimulates neurite outgrowth in cerebellar granular neurons modulated via PKA, ERK, and most strongly PI3K-mediated signaling pathways. This chain is G-protein coupled receptor 3 (Gpr3), found in Rattus norvegicus (Rat).